A 1180-amino-acid polypeptide reads, in one-letter code: Integrin alpha-1 (1180 aa).

The signal sequence occupies residues 1 to 28; it reads MVPRRPASLEVTVACIWLLTVILGFCVS. Topologically, residues 29–1142 are extracellular; sequence FNVDVKNSMS…SKDGLPGRVP (1114 aa). One copy of the FG-GAP 1 repeat lies at 30–91; sequence NVDVKNSMSF…CPVGRERAMP (62 aa). The cysteines at positions 82 and 92 are disulfide-linked. Residues N100, N105, N112, N217, N317, N341, N402, N418, and N459 are each glycosylated (N-linked (GlcNAc...) asparagine). The stretch at 101–160 is one FG-GAP 2 repeat; sequence TSIPNVTEIKENMTFGSTLVTNPNGGFLACGPLYAYRCGHLHYTTGICSDVSPTFQVVNS. A VWFA domain is found at 175 to 364; sequence IVLDGSNSIY…LGERIFALEA (190 aa). An FG-GAP 3 repeat occupies 365–417; sequence TADQSAASFEMEMSQTGFSAHYSQDWVMLGAVGAYDWNGTVVMQKANQMVIPH. 4 FG-GAP repeats span residues 422–474, 475–537, 556–614, and 618–678; these read QTEP…DGNI, NILQ…RFEY, SCTK…TIRE, and QRIP…FEPN. D497, D499, D501, and D505 together coordinate Ca(2+). A glycan (N-linked (GlcNAc...) asparagine) is linked at N531. Positions 579, 581, 583, 587, 641, 643, 645, and 649 each coordinate Ca(2+). C687 and C696 are disulfide-bonded. N-linked (GlcNAc...) asparagine glycosylation is found at N698, N747, and N779. C702 and C755 are disulfide-bonded. An intrachain disulfide couples C807 to C813. N-linked (GlcNAc...) asparagine glycans are attached at residues N820, N839, N882, N907, N938, N965, N973, and N1007. An intrachain disulfide couples C877 to C885. 2 disulfide bridges follow: C1029-C1062 and C1066-C1073. 3 N-linked (GlcNAc...) asparagine glycosylation sites follow: N1084, N1103, and N1114. A helical transmembrane segment spans residues 1143–1165; it reads LWVILLSAFAGLLLLMLLILALW. Over 1166-1180 the chain is Cytoplasmic; sequence KIGFFKRPLKKKMEK. The GFFKR motif signature appears at 1168 to 1172; the sequence is GFFKR.

The protein belongs to the integrin alpha chain family. As to quaternary structure, heterodimer of an alpha and a beta subunit. Alpha-1 associates with beta-1. Interacts with RAB21. Interacts (via cytoplasmic domain) with PTPN2; activates PTPN2 phosphatase activity towards EGFR and negatively regulates EGF signaling.

It is found in the membrane. In terms of biological role, integrin alpha-1/beta-1 is a receptor for laminin and collagen. It recognizes the proline-hydroxylated sequence G-F-P-G-E-R in collagen. Involved in anchorage-dependent, negative regulation of EGF-stimulated cell growth. The sequence is that of Integrin alpha-1 (Itga1) from Rattus norvegicus (Rat).